The primary structure comprises 347 residues: N-acetyl-gamma-glutamyl-phosphate reductase (347 aa).

Cysteine 150 is a catalytic residue.

This sequence belongs to the NAGSA dehydrogenase family. Type 1 subfamily.

Its subcellular location is the cytoplasm. The catalysed reaction is N-acetyl-L-glutamate 5-semialdehyde + phosphate + NADP(+) = N-acetyl-L-glutamyl 5-phosphate + NADPH + H(+). It participates in amino-acid biosynthesis; L-arginine biosynthesis; N(2)-acetyl-L-ornithine from L-glutamate: step 3/4. Catalyzes the NADPH-dependent reduction of N-acetyl-5-glutamyl phosphate to yield N-acetyl-L-glutamate 5-semialdehyde. This chain is N-acetyl-gamma-glutamyl-phosphate reductase, found in Halothermothrix orenii (strain H 168 / OCM 544 / DSM 9562).